Here is a 454-residue protein sequence, read N- to C-terminus: Serine/threonine-protein kinase NLK2 (454 aa).

Residues 67-356 enclose the Protein kinase domain; that stretch reads PEPDRPIGYG…AKDALAHPYL (290 aa). Residues 73-81 and lysine 96 contribute to the ATP site; that span reads IGYGAFGVV. Residue aspartate 193 is the Proton acceptor of the active site.

It belongs to the protein kinase superfamily. CMGC Ser/Thr protein kinase family. MAP kinase subfamily. As to quaternary structure, interacts with sox11, hmgxb4/hmg2l1, rnf138/narf, stat3.1 and mef2a. It depends on Mg(2+) as a cofactor.

It localises to the nucleus. Its subcellular location is the cytoplasm. The catalysed reaction is L-seryl-[protein] + ATP = O-phospho-L-seryl-[protein] + ADP + H(+). It carries out the reaction L-threonyl-[protein] + ATP = O-phospho-L-threonyl-[protein] + ADP + H(+). Activated by tyrosine and threonine phosphorylation. Negatively regulates Wnt/beta-catenin-signaling during development. Plays a role together with sox11 in neural induction during early embryogenesis. Involved in TGFbeta-mediated mesoderm induction in early embryos, acting downstream of map3k7/tak1 to phosphorylate stat3. Augments the rnf138/narf-directed ubiquitination and degradation of tcf/lef by enhancing the association of rnf138/narf and tcf/lef. Phosphorylates mef2a to play a role in anterior neural development, including eye formation. This Xenopus tropicalis (Western clawed frog) protein is Serine/threonine-protein kinase NLK2 (nlk.2).